The chain runs to 297 residues: Ribosomal RNA small subunit methyltransferase A (297 aa).

S-adenosyl-L-methionine-binding residues include N31, L33, G58, E79, D104, and N129.

The protein belongs to the class I-like SAM-binding methyltransferase superfamily. rRNA adenine N(6)-methyltransferase family. RsmA subfamily.

The protein resides in the cytoplasm. The catalysed reaction is adenosine(1518)/adenosine(1519) in 16S rRNA + 4 S-adenosyl-L-methionine = N(6)-dimethyladenosine(1518)/N(6)-dimethyladenosine(1519) in 16S rRNA + 4 S-adenosyl-L-homocysteine + 4 H(+). In terms of biological role, specifically dimethylates two adjacent adenosines (A1518 and A1519) in the loop of a conserved hairpin near the 3'-end of 16S rRNA in the 30S particle. May play a critical role in biogenesis of 30S subunits. The sequence is that of Ribosomal RNA small subunit methyltransferase A from Pediococcus pentosaceus (strain ATCC 25745 / CCUG 21536 / LMG 10740 / 183-1w).